The following is a 342-amino-acid chain: Ketol-acid reductoisomerase (NADP(+)) (342 aa).

Residues 2 to 182 (AELFYDDDAD…GGLRAAGIKT (181 aa)) form the KARI N-terminal Rossmann domain. NADP(+) contacts are provided by residues 25–28 (YGSQ), R48, S51, S53, and 83–86 (DQHQ). Residue H108 is part of the active site. G134 lines the NADP(+) pocket. The KARI C-terminal knotted domain maps to 183 to 328 (TFTEETETDL…RELRKLFAWV (146 aa)). The Mg(2+) site is built by D191, E195, E227, and E231. Position 252 (S252) interacts with substrate.

It belongs to the ketol-acid reductoisomerase family. Mg(2+) serves as cofactor.

The enzyme catalyses (2R)-2,3-dihydroxy-3-methylbutanoate + NADP(+) = (2S)-2-acetolactate + NADPH + H(+). It carries out the reaction (2R,3R)-2,3-dihydroxy-3-methylpentanoate + NADP(+) = (S)-2-ethyl-2-hydroxy-3-oxobutanoate + NADPH + H(+). Its pathway is amino-acid biosynthesis; L-isoleucine biosynthesis; L-isoleucine from 2-oxobutanoate: step 2/4. The protein operates within amino-acid biosynthesis; L-valine biosynthesis; L-valine from pyruvate: step 2/4. In terms of biological role, involved in the biosynthesis of branched-chain amino acids (BCAA). Catalyzes an alkyl-migration followed by a ketol-acid reduction of (S)-2-acetolactate (S2AL) to yield (R)-2,3-dihydroxy-isovalerate. In the isomerase reaction, S2AL is rearranged via a Mg-dependent methyl migration to produce 3-hydroxy-3-methyl-2-ketobutyrate (HMKB). In the reductase reaction, this 2-ketoacid undergoes a metal-dependent reduction by NADPH to yield (R)-2,3-dihydroxy-isovalerate. The sequence is that of Ketol-acid reductoisomerase (NADP(+)) from Beutenbergia cavernae (strain ATCC BAA-8 / DSM 12333 / CCUG 43141 / JCM 11478 / NBRC 16432 / NCIMB 13614 / HKI 0122).